Here is a 382-residue protein sequence, read N- to C-terminus: DNA replication and repair protein RecF (382 aa).

30-37 (GPNGHGKS) contacts ATP.

It belongs to the RecF family.

It localises to the cytoplasm. Its function is as follows. The RecF protein is involved in DNA metabolism; it is required for DNA replication and normal SOS inducibility. RecF binds preferentially to single-stranded, linear DNA. It also seems to bind ATP. The polypeptide is DNA replication and repair protein RecF (Magnetococcus marinus (strain ATCC BAA-1437 / JCM 17883 / MC-1)).